Consider the following 429-residue polypeptide: Enolase (429 aa).

Residue Gln166 coordinates (2R)-2-phosphoglycerate. The Proton donor role is filled by Glu208. Residues Asp245, Glu289, and Asp316 each contribute to the Mg(2+) site. (2R)-2-phosphoglycerate is bound by residues Lys341, Arg370, Ser371, and Lys392. Residue Lys341 is the Proton acceptor of the active site.

This sequence belongs to the enolase family. Component of the RNA degradosome, a multiprotein complex involved in RNA processing and mRNA degradation. The cofactor is Mg(2+).

It localises to the cytoplasm. The protein localises to the secreted. It is found in the cell surface. It carries out the reaction (2R)-2-phosphoglycerate = phosphoenolpyruvate + H2O. It participates in carbohydrate degradation; glycolysis; pyruvate from D-glyceraldehyde 3-phosphate: step 4/5. In terms of biological role, catalyzes the reversible conversion of 2-phosphoglycerate (2-PG) into phosphoenolpyruvate (PEP). It is essential for the degradation of carbohydrates via glycolysis. This is Enolase from Acinetobacter baumannii (strain AB307-0294).